The chain runs to 433 residues: 3-phosphoshikimate 1-carboxyvinyltransferase (433 aa).

Positions 23, 24, and 28 each coordinate 3-phosphoshikimate. Residue lysine 23 coordinates phosphoenolpyruvate. Positions 93 and 121 each coordinate phosphoenolpyruvate. The 3-phosphoshikimate site is built by serine 167, glutamine 169, aspartate 318, and lysine 345. Glutamine 169 is a binding site for phosphoenolpyruvate. Aspartate 318 acts as the Proton acceptor in catalysis. Positions 349 and 390 each coordinate phosphoenolpyruvate.

The protein belongs to the EPSP synthase family. Monomer.

The protein localises to the cytoplasm. It carries out the reaction 3-phosphoshikimate + phosphoenolpyruvate = 5-O-(1-carboxyvinyl)-3-phosphoshikimate + phosphate. The protein operates within metabolic intermediate biosynthesis; chorismate biosynthesis; chorismate from D-erythrose 4-phosphate and phosphoenolpyruvate: step 6/7. Functionally, catalyzes the transfer of the enolpyruvyl moiety of phosphoenolpyruvate (PEP) to the 5-hydroxyl of shikimate-3-phosphate (S3P) to produce enolpyruvyl shikimate-3-phosphate and inorganic phosphate. The sequence is that of 3-phosphoshikimate 1-carboxyvinyltransferase from Nitratiruptor sp. (strain SB155-2).